The sequence spans 106 residues: UPF0060 membrane protein RL1530 (106 aa).

The next 4 helical transmembrane spans lie at 4–24, 30–50, 58–78, and 86–106; these read IIFA…WAWL, VWWL…LTLV, TFAA…WLVE, and DIGG…APRG.

The protein belongs to the UPF0060 family.

The protein resides in the cell inner membrane. This chain is UPF0060 membrane protein RL1530, found in Rhizobium johnstonii (strain DSM 114642 / LMG 32736 / 3841) (Rhizobium leguminosarum bv. viciae).